The sequence spans 295 residues: DegV domain-containing protein MG326 (295 aa).

The DegV domain occupies 4–292 (TAIITDSTAS…IDAFSISLLI (289 aa)). Thr-63 and Ser-95 together coordinate hexadecanoate.

Functionally, may bind long-chain fatty acids, such as palmitate, and may play a role in lipid transport or fatty acid metabolism. The polypeptide is DegV domain-containing protein MG326 (Mycoplasma genitalium (strain ATCC 33530 / DSM 19775 / NCTC 10195 / G37) (Mycoplasmoides genitalium)).